Here is an 81-residue protein sequence, read N- to C-terminus: Cortexin-2 (81 aa).

A helical membrane pass occupies residues 29 to 49 (TAFAFVGMLLVFLGLLIVRCF).

It belongs to the cortexin family.

The protein localises to the membrane. The chain is Cortexin-2 (ctxn2) from Danio rerio (Zebrafish).